A 534-amino-acid polypeptide reads, in one-letter code: Monolignol oxidoreductase AtBBE-like 13 (534 aa).

The first 29 residues, 1–29, serve as a signal peptide directing secretion; it reads MAFVLMNNTNAFLVTLLLLSLSYIPLSFS. 2 N-linked (GlcNAc...) asparagine glycosylation sites follow: N7 and N59. C38 and C102 are joined by a disulfide. Positions 117–181 form a cross-link, 6-(S-cysteinyl)-8alpha-(pros-histidyl)-FAD (His-Cys); sequence HDYEGLSYVS…KIHGFPAGLC (65 aa).

The protein belongs to the oxygen-dependent FAD-linked oxidoreductase family. FAD is required as a cofactor. The FAD cofactor is bound via a bicovalent 6-S-cysteinyl, 8alpha-N1-histidyl FAD linkage.

The protein resides in the secreted. The protein localises to the cell wall. It carries out the reaction (E)-4-coumaroyl alcohol + A = (E)-4-coumaraldehyde + AH2. The catalysed reaction is (E)-coniferol + A = (E)-coniferaldehyde + AH2. It catalyses the reaction (E)-sinapyl alcohol + A = (E)-sinapaldehyde + AH2. It functions in the pathway phenylpropanoid metabolism. Functionally, mediates oxidation of p-hydroxylated derivatives of cinnamyl alcohol (i.e. the monolignols p-coumaryl-, coniferyl-, and sinapyl alcohol) to their corresponding aldehydes. The electron acceptor required for these reactions is not known, but does not seem to be dioxygen. Is much less efficient towards cinnamyl alcohol. The protein is Monolignol oxidoreductase AtBBE-like 13 of Arabidopsis thaliana (Mouse-ear cress).